The primary structure comprises 248 residues: Adenosylcobinamide-GDP ribazoletransferase (248 aa).

The next 5 membrane-spanning stretches (helical) occupy residues 30-50 (LAES…CYAL), 54-74 (VLSG…LTAV), 112-132 (FGAL…DAVI), 134-154 (AGSF…MVLA), and 188-208 (AVSA…LAAG).

Belongs to the CobS family. Mg(2+) is required as a cofactor.

The protein localises to the cell inner membrane. It catalyses the reaction alpha-ribazole + adenosylcob(III)inamide-GDP = adenosylcob(III)alamin + GMP + H(+). The catalysed reaction is alpha-ribazole 5'-phosphate + adenosylcob(III)inamide-GDP = adenosylcob(III)alamin 5'-phosphate + GMP + H(+). Its pathway is cofactor biosynthesis; adenosylcobalamin biosynthesis; adenosylcobalamin from cob(II)yrinate a,c-diamide: step 7/7. Joins adenosylcobinamide-GDP and alpha-ribazole to generate adenosylcobalamin (Ado-cobalamin). Also synthesizes adenosylcobalamin 5'-phosphate from adenosylcobinamide-GDP and alpha-ribazole 5'-phosphate. The protein is Adenosylcobinamide-GDP ribazoletransferase of Syntrophobacter fumaroxidans (strain DSM 10017 / MPOB).